Here is a 1240-residue protein sequence, read N- to C-terminus: DNA polymerase catalytic subunit (1240 aa).

Residues 1–22 (MFCAAGGPASPGGKPAARAASG) are compositionally biased toward low complexity. 3 disordered regions span residues 1-44 (MFCA…RRQN), 646-695 (GLDK…RETG), and 1103-1139 (AAAP…ASKP). A compositionally biased stretch (acidic residues) spans 669-688 (NGDEDKDDDEDGDEDGDERE).

Belongs to the DNA polymerase type-B family. As to quaternary structure, forms a complex with the ssDNA-binding protein UL29, the DNA polymerase processivity factor, and the alkaline exonuclease. Interacts with the putative helicase-primase complex subunit UL8; this interaction may coordinate leading and lagging strand DNA synthesis at the replication fork.

The protein resides in the host nucleus. The enzyme catalyses DNA(n) + a 2'-deoxyribonucleoside 5'-triphosphate = DNA(n+1) + diphosphate. The catalysed reaction is Endonucleolytic cleavage to 5'-phosphomonoester.. Functionally, replicates viral genomic DNA. The replication complex is composed of six viral proteins: the DNA polymerase, processivity factor, primase, primase-associated factor, helicase, and ssDNA-binding protein. Additionally, the polymerase contains an intrinsic ribonuclease H (RNase H) activity that specifically degrades RNA/DNA heteroduplexes or duplex DNA substrates in the 5' to 3' direction. Therefore, it can catalyze the excision of the RNA primers that initiate the synthesis of Okazaki fragments at a replication fork during viral DNA replication. The polypeptide is DNA polymerase catalytic subunit (Human herpesvirus 2 (strain HG52) (HHV-2)).